Reading from the N-terminus, the 513-residue chain is GMP synthase [glutamine-hydrolyzing] (513 aa).

One can recognise a Glutamine amidotransferase type-1 domain in the interval 8–198 (MILVLDFGSQ…VFGVCDCDGK (191 aa)). Cysteine 85 serves as the catalytic Nucleophile. Residues histidine 172 and glutamate 174 contribute to the active site. The GMPS ATP-PPase domain maps to 199–388 (WSMENFIEIE…LGIPDDIVWR (190 aa)). Residue 226 to 232 (SGGVDSS) participates in ATP binding.

As to quaternary structure, homodimer.

The catalysed reaction is XMP + L-glutamine + ATP + H2O = GMP + L-glutamate + AMP + diphosphate + 2 H(+). The protein operates within purine metabolism; GMP biosynthesis; GMP from XMP (L-Gln route): step 1/1. Functionally, catalyzes the synthesis of GMP from XMP. The sequence is that of GMP synthase [glutamine-hydrolyzing] from Bacillus pumilus (strain SAFR-032).